The primary structure comprises 496 residues: Histidine--tRNA ligase (496 aa).

Belongs to the class-II aminoacyl-tRNA synthetase family. In terms of assembly, homodimer.

Its subcellular location is the cytoplasm. It catalyses the reaction tRNA(His) + L-histidine + ATP = L-histidyl-tRNA(His) + AMP + diphosphate + H(+). This chain is Histidine--tRNA ligase, found in Bartonella bacilliformis (strain ATCC 35685 / KC583 / Herrer 020/F12,63).